The sequence spans 353 residues: MTITLGKSSKEEQTLFDTVDDWLRRDRFVFVGWSGLLLFPCAYFALGGWFTGTTFVTSWYTHGLASSYLEGCNFLTAAVSTPANSLAHSLLLLWGPEAQGDFTRWCQLGGLWTFVALHGAFGLIGFMLRQFELARSVQLRPYNAIAFSAPIAVFVSVFLIYPLGQSGWFFAPSFGVAAIFRFILFFQGFHNWTLNPFHMMGVAGVLGAALLCAIHGATVENTLFEDGDGANTFRAFNPTQAEETYSMVTANRFWSQIFGVAFSNKRWLHFFMLFVPVTGSWMSAIGVVGLALNLRAYDFVSQEIRAAEDPESETFYTKNILLNEGIRAWMAAQDQPHENLIFPEEVLPRGNAL.

At T2 the chain carries N-acetylthreonine. T2 carries the phosphothreonine modification. Residues 41–61 (CAYFALGGWFTGTTFVTSWYT) form a helical membrane-spanning segment. H118 serves as a coordination point for chlorophyll a. A helical transmembrane segment spans residues 125-141 (GFMLRQFELARSVQLRP). Pheophytin a contacts are provided by Q130 and N143. A helical membrane pass occupies residues 153–166 (VFVSVFLIYPLGQS). H198 provides a ligand contact to chlorophyll a. A helical transmembrane segment spans residues 208–228 (AALLCAIHGATVENTLFEDGD). Positions 215 and 262 each coordinate a plastoquinone. H215 contacts Fe cation. Residue H269 coordinates Fe cation. A helical transmembrane segment spans residues 279–295 (GSWMSAIGVVGLALNLR).

Belongs to the reaction center PufL/M/PsbA/D family. As to quaternary structure, PSII is composed of 1 copy each of membrane proteins PsbA, PsbB, PsbC, PsbD, PsbE, PsbF, PsbH, PsbI, PsbJ, PsbK, PsbL, PsbM, PsbT, PsbX, PsbY, PsbZ, Psb30/Ycf12, at least 3 peripheral proteins of the oxygen-evolving complex and a large number of cofactors. It forms dimeric complexes. Requires The D1/D2 heterodimer binds P680, chlorophylls that are the primary electron donor of PSII, and subsequent electron acceptors. It shares a non-heme iron and each subunit binds pheophytin, quinone, additional chlorophylls, carotenoids and lipids. There is also a Cl(-1) ion associated with D1 and D2, which is required for oxygen evolution. The PSII complex binds additional chlorophylls, carotenoids and specific lipids. as cofactor.

Its subcellular location is the plastid. The protein resides in the chloroplast thylakoid membrane. It carries out the reaction 2 a plastoquinone + 4 hnu + 2 H2O = 2 a plastoquinol + O2. Functionally, photosystem II (PSII) is a light-driven water:plastoquinone oxidoreductase that uses light energy to abstract electrons from H(2)O, generating O(2) and a proton gradient subsequently used for ATP formation. It consists of a core antenna complex that captures photons, and an electron transfer chain that converts photonic excitation into a charge separation. The D1/D2 (PsbA/PsbD) reaction center heterodimer binds P680, the primary electron donor of PSII as well as several subsequent electron acceptors. D2 is needed for assembly of a stable PSII complex. This chain is Photosystem II D2 protein, found in Pinus koraiensis (Korean pine).